A 236-amino-acid polypeptide reads, in one-letter code: Phosphoribosylaminoimidazole-succinocarboxamide synthase (236 aa).

This sequence belongs to the SAICAR synthetase family.

The catalysed reaction is 5-amino-1-(5-phospho-D-ribosyl)imidazole-4-carboxylate + L-aspartate + ATP = (2S)-2-[5-amino-1-(5-phospho-beta-D-ribosyl)imidazole-4-carboxamido]succinate + ADP + phosphate + 2 H(+). It functions in the pathway purine metabolism; IMP biosynthesis via de novo pathway; 5-amino-1-(5-phospho-D-ribosyl)imidazole-4-carboxamide from 5-amino-1-(5-phospho-D-ribosyl)imidazole-4-carboxylate: step 1/2. This chain is Phosphoribosylaminoimidazole-succinocarboxamide synthase, found in Rickettsia akari (strain Hartford).